The sequence spans 573 residues: DNA polymerase lambda (573 aa).

One can recognise a BRCT domain in the interval 35–131 (EARGWLSSLR…RLTDTEGFSL (97 aa)). 2 disordered regions span residues 126 to 204 (TEGF…GPQV) and 214 to 233 (TGHYPTPPEEDGGPDPAPEA). The tract at residues 263 to 277 (KAYSVQGDKWRALGY) is DNA-binding. Lys-310 functions as the Schiff-base intermediate with DNA in the catalytic mechanism. The interval 343 to 346 (GTKT) is DNA-binding. Residues Arg-384, 415–418 (SYRR), and 424–427 (GDVD) contribute to the dCTP site. Residues 418 to 427 (RGKMTCGDVD) form an involved in primer binding region. Asp-425, Asp-427, and Asp-488 together coordinate Mn(2+). The DNA-binding stretch occupies residues 464-503 (ENGQQQKYLGVCRLPGPGKRHRRLDIIVVPYCEFACALLY). Asn-511 serves as a coordination point for dCTP.

This sequence belongs to the DNA polymerase type-X family. In terms of assembly, interacts with PCNA. Interacts with PAXX; promoting POLL recruitment to double-strand breaks (DSBs) and stimulation of the end-filling activity of POLL. Interacts with XRCC4; promoting POLL recruitment to double-strand breaks (DSBs) and stimulation of the end-filling activity of POLL. Interacts with NHEJ1/XLF; promoting POLL recruitment to double-strand breaks (DSBs) and stimulation of the end-filling activity of POLL. Mn(2+) serves as cofactor.

Its subcellular location is the nucleus. The enzyme catalyses DNA(n) + a 2'-deoxyribonucleoside 5'-triphosphate = DNA(n+1) + diphosphate. In terms of biological role, DNA polymerase that functions in several pathways of DNA repair. Involved in base excision repair (BER) responsible for repair of lesions that give rise to abasic (AP) sites in DNA. Also contributes to DNA double-strand break repair by non-homologous end joining and homologous recombination. Has both template-dependent and template-independent (terminal transferase) DNA polymerase activities. Also has a 5'-deoxyribose-5-phosphate lyase (dRP lyase) activity. The chain is DNA polymerase lambda from Mus musculus (Mouse).